A 227-amino-acid polypeptide reads, in one-letter code: PKHD-type hydroxylase BPSS1206 (227 aa).

Positions 78-178 constitute a Fe2OG dioxygenase domain; the sequence is KVFPPLFNRY…RVASFFWIQS (101 aa). Residues His-96, Asp-98, and His-159 each contribute to the Fe cation site. 2-oxoglutarate is bound at residue Arg-169.

Fe(2+) serves as cofactor. L-ascorbate is required as a cofactor.

The polypeptide is PKHD-type hydroxylase BPSS1206 (Burkholderia pseudomallei (strain K96243)).